A 272-amino-acid polypeptide reads, in one-letter code: ATP synthase subunit a (272 aa).

The next 7 helical transmembrane spans lie at 39-59 (GFWA…LIFI), 103-123 (VAPL…LKWI), 124-144 (PVDY…KIVP), 152-172 (FGIS…VKGV), 181-201 (FTPF…IIGL), 221-241 (VVFI…NVPW), and 242-262 (AIFH…LTVV).

This sequence belongs to the ATPase A chain family. F-type ATPases have 2 components, CF(1) - the catalytic core - and CF(0) - the membrane proton channel. CF(1) has five subunits: alpha(3), beta(3), gamma(1), delta(1), epsilon(1). CF(0) has three main subunits: a(1), b(2) and c(9-12). The alpha and beta chains form an alternating ring which encloses part of the gamma chain. CF(1) is attached to CF(0) by a central stalk formed by the gamma and epsilon chains, while a peripheral stalk is formed by the delta and b chains.

The protein resides in the cell inner membrane. Its function is as follows. Key component of the proton channel; it plays a direct role in the translocation of protons across the membrane. The polypeptide is ATP synthase subunit a (Ectopseudomonas mendocina (strain ymp) (Pseudomonas mendocina)).